The sequence spans 900 residues: Nuclear factor NF-kappa-B p100 subunit (900 aa).

A phosphoserine mark is found at S23 and S161. Positions P38–L343 constitute an RHD domain. A Nuclear localization signal motif is present at residues R337 to K341. The tract at residues F346–G377 is GRR. Residues G404–Q435 are disordered. T429 is modified (phosphothreonine). ANK repeat units follow at residues N487–V519, L526–L555, H559–Q591, E599–A628, G633–A663, and A667–A696. The disordered stretch occupies residues N698–L734. Phosphoserine occurs at positions 713, 715, and 717. Residues R729 to L758 form an ANK 7 repeat. Positions A764–E851 constitute a Death domain. Residue S812 is modified to Phosphoserine. Over residues G849–S866 the composition is skewed to basic and acidic residues. The tract at residues G849 to H900 is disordered. K855 is covalently cross-linked (Glycyl lysine isopeptide (Lys-Gly) (interchain with G-Cter in ubiquitin)). Phosphoserine; by MAP3K14 occurs at positions 866 and 870. Positions G888–H900 are enriched in low complexity.

Component of the NF-kappa-B RelB-p52 complex. Homodimer; component of the NF-kappa-B p52-p52 complex. Component of the NF-kappa-B p65-p52 complex. Component of the NF-kappa-B p52-c-Rel complex. NFKB2/p52 interacts with NFKBIE. Component of a complex consisting of the NF-kappa-B p50-p50 homodimer and BCL3. Directly interacts with MEN1. Post-translationally, while translation occurs, the particular unfolded structure after the GRR repeat promotes the generation of p52 making it an acceptable substrate for the proteasome. This process is known as cotranslational processing. The processed form is active and the unprocessed form acts as an inhibitor (I kappa B-like), being able to form cytosolic complexes with NF-kappa B, trapping it in the cytoplasm. Complete folding of the region downstream of the GRR repeat precludes processing. In terms of processing, subsequent to MAP3K14-dependent serine phosphorylation, p100 polyubiquitination occurs then triggering its proteasome-dependent processing. Constitutive processing is tightly suppressed by its C-terminal processing inhibitory domain, named PID, which contains the death domain. Post-translationally, ubiquitinated by TRIM55; leading to processing by VCP and subsequent ubiquitin-dependent protein degradation by the proteasome.

It localises to the nucleus. Its subcellular location is the cytoplasm. In terms of biological role, NF-kappa-B is a pleiotropic transcription factor present in almost all cell types and is the endpoint of a series of signal transduction events that are initiated by a vast array of stimuli related to many biological processes such as inflammation, immunity, differentiation, cell growth, tumorigenesis and apoptosis. NF-kappa-B is a homo- or heterodimeric complex formed by the Rel-like domain-containing proteins RELA/p65, RELB, NFKB1/p105, NFKB1/p50, REL and NFKB2/p52. The dimers bind at kappa-B sites in the DNA of their target genes and the individual dimers have distinct preferences for different kappa-B sites that they can bind with distinguishable affinity and specificity. Different dimer combinations act as transcriptional activators or repressors, respectively. NF-kappa-B is controlled by various mechanisms of post-translational modification and subcellular compartmentalization as well as by interactions with other cofactors or corepressors. NF-kappa-B complexes are held in the cytoplasm in an inactive state complexed with members of the NF-kappa-B inhibitor (I-kappa-B) family. In a conventional activation pathway, I-kappa-B is phosphorylated by I-kappa-B kinases (IKKs) in response to different activators, subsequently degraded thus liberating the active NF-kappa-B complex which translocates to the nucleus. In a non-canonical activation pathway, the MAP3K14-activated CHUK/IKKA homodimer phosphorylates NFKB2/p100 associated with RelB, inducing its proteolytic processing to NFKB2/p52 and the formation of NF-kappa-B RelB-p52 complexes. The NF-kappa-B heterodimeric RelB-p52 complex is a transcriptional activator. The NF-kappa-B p52-p52 homodimer is a transcriptional repressor. NFKB2 appears to have dual functions such as cytoplasmic retention of attached NF-kappa-B proteins by p100 and generation of p52 by a cotranslational processing. The proteasome-mediated process ensures the production of both p52 and p100 and preserves their independent function. p52 binds to the kappa-B consensus sequence 5'-GGRNNYYCC-3', located in the enhancer region of genes involved in immune response and acute phase reactions. p52 and p100 are respectively the minor and major form; the processing of p100 being relatively poor. Isoform p49 is a subunit of the NF-kappa-B protein complex, which stimulates the HIV enhancer in synergy with p65. In concert with RELB, regulates the circadian clock by repressing the transcriptional activator activity of the CLOCK-BMAL1 heterodimer. The polypeptide is Nuclear factor NF-kappa-B p100 subunit (NFKB2) (Homo sapiens (Human)).